Reading from the N-terminus, the 208-residue chain is MLKIIFPSFMLLPLTWLSSNKKVWINVTTYSLLINLISINLLWQNNENNLSFSTMFSADPLSAPLLVLTTWLLPLMLLASQNHIKKESEHNKKLYISLLVCLQTLLIMTFSANELIMFYILFEATLIPTLIIITRWGNQTERLNAGIYFLFYTLVGSIPLLIALIYIQNWTGTLNLILMTLDSSPINQTWSNNILWLACIMAFMVKMP.

6 helical membrane-spanning segments follow: residues 23–43 (VWINVTTYSLLINLISINLLW), 60–80 (PLSAPLLVLTTWLLPLMLLAS), 93–113 (KLYISLLVCLQTLLIMTFSAN), 114–134 (ELIMFYILFEATLIPTLIIIT), 147–167 (IYFLFYTLVGSIPLLIALIYI), and 185–205 (PINQTWSNNILWLACIMAFMV).

This sequence belongs to the complex I subunit 4 family. Core subunit of respiratory chain NADH dehydrogenase (Complex I) which is composed of 45 different subunits.

It localises to the mitochondrion inner membrane. It carries out the reaction a ubiquinone + NADH + 5 H(+)(in) = a ubiquinol + NAD(+) + 4 H(+)(out). Its function is as follows. Core subunit of the mitochondrial membrane respiratory chain NADH dehydrogenase (Complex I) which catalyzes electron transfer from NADH through the respiratory chain, using ubiquinone as an electron acceptor. Essential for the catalytic activity and assembly of complex I. The polypeptide is NADH-ubiquinone oxidoreductase chain 4 (MT-ND4) (Microtus pennsylvanicus (Meadow vole)).